The primary structure comprises 304 residues: MLKKDLLGIKDLTREEILEILDLAFEMKKLLNGEKYSQALRGKTVVTIFFEPSTRTRLSFEMAAKYLGAHYGNIEVATSSVVKGESLIDTIRTVERMKADVIVTRHNMSGTPHLLAKYTNASIINGGDGINEHPTQALLDMMTIKEKKGDFKGLKVAIIGDIMHSRVARSNIWGLKKLGAEVKVAGPSTLMPPQIEKMGVKVCYNAEEAIKDADVVMGLRIQLERQKSGLFPSIEEYREYFGINEERMRLAKSDAILMHPGPINRNVEVTSGAANASYSVIEEQITNGVAVRMALLKILCERRN.

Residues Arg-55 and Thr-56 each coordinate carbamoyl phosphate. Lys-83 is an L-aspartate binding site. Carbamoyl phosphate is bound by residues Arg-105, His-133, and Gln-136. The L-aspartate site is built by Arg-166 and Arg-220. Carbamoyl phosphate is bound by residues Gly-261 and Pro-262.

Belongs to the aspartate/ornithine carbamoyltransferase superfamily. ATCase family. As to quaternary structure, heterododecamer (2C3:3R2) of six catalytic PyrB chains organized as two trimers (C3), and six regulatory PyrI chains organized as three dimers (R2).

It carries out the reaction carbamoyl phosphate + L-aspartate = N-carbamoyl-L-aspartate + phosphate + H(+). Its pathway is pyrimidine metabolism; UMP biosynthesis via de novo pathway; (S)-dihydroorotate from bicarbonate: step 2/3. In terms of biological role, catalyzes the condensation of carbamoyl phosphate and aspartate to form carbamoyl aspartate and inorganic phosphate, the committed step in the de novo pyrimidine nucleotide biosynthesis pathway. The chain is Aspartate carbamoyltransferase catalytic subunit from Caldanaerobacter subterraneus subsp. tengcongensis (strain DSM 15242 / JCM 11007 / NBRC 100824 / MB4) (Thermoanaerobacter tengcongensis).